The sequence spans 406 residues: Vacuole membrane protein 1 (406 aa).

A disordered region spans residues 1-22 (MAENGTDCEQRRVGMPKEQNNG). The Cytoplasmic segment spans residues 1-42 (MAENGTDCEQRRVGMPKEQNNGSFQDPSFMCNRKRRDREERQ). A helical membrane pass occupies residues 43 to 63 (SIVLWRKPLITLQYFILEVLI). Over 64 to 76 (NLKEWSVRLWHRR) the chain is Extracellular. The chain crosses the membrane as a helical span at residues 77 to 97 (MMVVSVLLLLAVLSVAYYIEG). The Cytoplasmic segment spans residues 98 to 110 (EHQQCVQYIEKKC). The helical transmembrane segment at 111 to 131 (LWCAYWVGLGILSSVGLGTGL) threads the bilayer. Topologically, residues 132 to 250 (HTFLLYLGPH…ATRAKLTVQN (119 aa)) are extracellular. Residues 173–316 (GTEGAISLWT…FVIITFSKHI (144 aa)) are VTT domain. A helical membrane pass occupies residues 251 to 271 (LVQKVGFLGILACASIPNPLF). Residues 272-273 (DL) lie on the Cytoplasmic side of the membrane. The helical transmembrane segment at 274 to 294 (AGITCGHFLVPFWTFFGATLI) threads the bilayer. The Extracellular segment spans residues 295-306 (GKAIIKMHIQKL). Residues 307–327 (FVIITFSKHIVEQMVSLIGVI) traverse the membrane as a helical segment. Residues 328–363 (PSIGPSLQKPFQEYLEAQRKKLHHKGDSGTPQSENW) are Cytoplasmic-facing. The chain crosses the membrane as a helical span at residues 364–384 (LSWAFEKLVIIMVFYFILSII). Over 385 to 406 (NSMAQSYAKRVQQKKLSVEKTK) the chain is Extracellular.

This sequence belongs to the VMP1 family.

Its subcellular location is the endoplasmic reticulum-Golgi intermediate compartment membrane. The protein localises to the cell membrane. It localises to the vacuole membrane. The protein resides in the endoplasmic reticulum membrane. The catalysed reaction is a 1,2-diacyl-sn-glycero-3-phospho-L-serine(in) = a 1,2-diacyl-sn-glycero-3-phospho-L-serine(out). The enzyme catalyses cholesterol(in) = cholesterol(out). It catalyses the reaction a 1,2-diacyl-sn-glycero-3-phosphocholine(in) = a 1,2-diacyl-sn-glycero-3-phosphocholine(out). It carries out the reaction a 1,2-diacyl-sn-glycero-3-phosphoethanolamine(in) = a 1,2-diacyl-sn-glycero-3-phosphoethanolamine(out). In terms of biological role, phospholipid scramblase involved in lipid homeostasis and membrane dynamics processes. Has phospholipid scramblase activity toward cholesterol and phosphatidylserine, as well as phosphatidylethanolamine and phosphatidylcholine. Required for autophagosome formation: participates in early stages of autophagosome biogenesis at the endoplasmic reticulum (ER) membrane by reequilibrating the leaflets of the ER as lipids are extracted by atg2 (atg2a or atg2b) to mediate autophagosome assembly. In addition to autophagy, involved in other processes in which phospholipid scramblase activity is required. Modulates ER contacts with lipid droplets, mitochondria and endosomes. The sequence is that of Vacuole membrane protein 1 from Xenopus laevis (African clawed frog).